Consider the following 399-residue polypeptide: Transaminase BacF (399 aa).

Residues 103-104 (GK), Tyr128, Asn178, Tyr209, and 236-238 (SFS) each bind pyridoxal 5'-phosphate. Lys239 carries the N6-(pyridoxal phosphate)lysine modification. A pyridoxal 5'-phosphate-binding site is contributed by Arg247.

This sequence belongs to the class-I pyridoxal-phosphate-dependent aminotransferase family. In terms of assembly, homodimer. Requires pyridoxal 5'-phosphate as cofactor.

Its subcellular location is the cytoplasm. Its pathway is antibiotic biosynthesis; bacilysin biosynthesis. Its function is as follows. Part of the bacABCDEF operon responsible for the biosynthesis of the nonribosomally synthesized dipeptide antibiotic bacilysin, composed of L-alanine and L-anticapsin. Bacilysin is an irreversible inactivator of the glutaminase domain of glucosamine synthetase. Catalyzes the reductive amination of the C2 ketone of tetrahydro-hydroxyphenylpyruvate (H4HPP), with L-Phe as an amino donor, to yield tetrahydrotyrosine (H4Tyr) diastereomer. D-Phe is not an effective amino donor. BacF associated to BacG converts 3E,7R- and 3Z,7R-ex-H2HPP to 2S,4R,7R- and 2S,4S,7R-H4Tyr, respectively. Given that bacilysin has the 2S,4S stereochemistry in its anticapsin moiety, it is likely that the 2S,4S-H4Tyr is the diastereomer used for the biosynthesis. This chain is Transaminase BacF, found in Bacillus subtilis (strain 168).